Here is a 265-residue protein sequence, read N- to C-terminus: Translation initiation factor 2 subunit alpha (265 aa).

The region spanning 12 to 83 (GELIIGTVYK…KKGHVDASLK (72 aa)) is the S1 motif domain.

Belongs to the eIF-2-alpha family. As to quaternary structure, heterotrimer composed of an alpha, a beta and a gamma chain.

Functionally, eIF-2 functions in the early steps of protein synthesis by forming a ternary complex with GTP and initiator tRNA. The chain is Translation initiation factor 2 subunit alpha from Methanobrevibacter smithii (strain ATCC 35061 / DSM 861 / OCM 144 / PS).